The primary structure comprises 143 residues: Ayaconin (143 aa).

The first 22 residues, 1–22, serve as a signal peptide directing secretion; that stretch reads MSFLFFLVVLISIGLWVGPCVA.

As to quaternary structure, interacts with human F12 (inactive). Salivary gland.

The protein resides in the secreted. In terms of biological role, inhibits the intrinsic blood coagulation pathway in the host by blocking activation of host coagulation factor XII (F12). In Lutzomyia ayacuchensis (Sand fly), this protein is Ayaconin.